The sequence spans 1611 residues: Pentafunctional AROM polypeptide (1611 aa).

The interval 1-391 (MSSSSADVLK…YEEKASVVAD (391 aa)) is 3-dehydroquinate synthase. Residues 47-49 (DTN), 84-87 (EGAK), 115-117 (GGV), and D120 each bind NAD(+). Residue R131 coordinates 7-phospho-2-dehydro-3-deoxy-D-arabino-heptonate. An NAD(+)-binding site is contributed by 140 to 141 (TT). 2 residues coordinate 7-phospho-2-dehydro-3-deoxy-D-arabino-heptonate: D147 and K153. K162 contacts NAD(+). N163 lines the 7-phospho-2-dehydro-3-deoxy-D-arabino-heptonate pocket. Residues 180-183 (FLTT) and N191 contribute to the NAD(+) site. E195 serves as a coordination point for Zn(2+). Residues 195-198 (EVIK) and K257 each bind 7-phospho-2-dehydro-3-deoxy-D-arabino-heptonate. E267 (proton acceptor; for 3-dehydroquinate synthase activity) is an active-site residue. 7-phospho-2-dehydro-3-deoxy-D-arabino-heptonate-binding positions include 271–275 (RNLVN) and H278. H278 is a binding site for Zn(2+). Residue H282 is the Proton acceptor; for 3-dehydroquinate synthase activity of the active site. Positions 294 and 363 each coordinate 7-phospho-2-dehydro-3-deoxy-D-arabino-heptonate. H294 is a binding site for Zn(2+). Residues 404–863 (VKAATPTKSP…WDDLQNKIGV (460 aa)) are EPSP synthase. C845 serves as the catalytic For EPSP synthase activity. The shikimate kinase stretch occupies residues 892–1093 (DRPIFLIGMR…SVGNPTSFLS (202 aa)). 899 to 906 (GMRGAGKT) is an ATP binding site. Residues 1094 to 1318 (LTFPDVTPAL…AAPGQLTARE (225 aa)) form a 3-dehydroquinase region. The active-site Proton acceptor; for 3-dehydroquinate dehydratase activity is the H1220. Residue K1248 is the Schiff-base intermediate with substrate; for 3-dehydroquinate dehydratase activity of the active site. Residues 1331-1611 (AKKFVLFGSP…RKAVLDKYFA (281 aa)) are shikimate dehydrogenase.

The protein in the N-terminal section; belongs to the sugar phosphate cyclases superfamily. Dehydroquinate synthase family. This sequence in the 2nd section; belongs to the EPSP synthase family. In the 3rd section; belongs to the shikimate kinase family. It in the 4th section; belongs to the type-I 3-dehydroquinase family. The protein in the C-terminal section; belongs to the shikimate dehydrogenase family. As to quaternary structure, homodimer. It depends on Zn(2+) as a cofactor.

Its subcellular location is the cytoplasm. It catalyses the reaction 7-phospho-2-dehydro-3-deoxy-D-arabino-heptonate = 3-dehydroquinate + phosphate. The catalysed reaction is 3-dehydroquinate = 3-dehydroshikimate + H2O. The enzyme catalyses shikimate + NADP(+) = 3-dehydroshikimate + NADPH + H(+). It carries out the reaction shikimate + ATP = 3-phosphoshikimate + ADP + H(+). It catalyses the reaction 3-phosphoshikimate + phosphoenolpyruvate = 5-O-(1-carboxyvinyl)-3-phosphoshikimate + phosphate. It participates in metabolic intermediate biosynthesis; chorismate biosynthesis; chorismate from D-erythrose 4-phosphate and phosphoenolpyruvate: step 2/7. The protein operates within metabolic intermediate biosynthesis; chorismate biosynthesis; chorismate from D-erythrose 4-phosphate and phosphoenolpyruvate: step 3/7. Its pathway is metabolic intermediate biosynthesis; chorismate biosynthesis; chorismate from D-erythrose 4-phosphate and phosphoenolpyruvate: step 4/7. It functions in the pathway metabolic intermediate biosynthesis; chorismate biosynthesis; chorismate from D-erythrose 4-phosphate and phosphoenolpyruvate: step 5/7. It participates in metabolic intermediate biosynthesis; chorismate biosynthesis; chorismate from D-erythrose 4-phosphate and phosphoenolpyruvate: step 6/7. Functionally, the AROM polypeptide catalyzes 5 consecutive enzymatic reactions in prechorismate polyaromatic amino acid biosynthesis. The chain is Pentafunctional AROM polypeptide from Cryptococcus neoformans var. neoformans serotype D (strain B-3501A) (Filobasidiella neoformans).